The primary structure comprises 553 residues: Formate--tetrahydrofolate ligase (553 aa).

62–69 is an ATP binding site; it reads TPAGEGKS.

The protein belongs to the formate--tetrahydrofolate ligase family.

The enzyme catalyses (6S)-5,6,7,8-tetrahydrofolate + formate + ATP = (6R)-10-formyltetrahydrofolate + ADP + phosphate. It functions in the pathway one-carbon metabolism; tetrahydrofolate interconversion. The protein is Formate--tetrahydrofolate ligase of Limosilactobacillus reuteri subsp. reuteri (strain JCM 1112) (Lactobacillus reuteri).